A 225-amino-acid polypeptide reads, in one-letter code: Cbp/p300-interacting transactivator 2 (225 aa).

It belongs to the CITED family.

The protein resides in the nucleus. In terms of biological role, transcriptional coactivator or corepressor of the p300/CBP-mediated transcription complex. May be involved in sex determination, early gonad development, left-right patterning during embryogenesis and differentiation of the adrenal cortex. The polypeptide is Cbp/p300-interacting transactivator 2 (cited2) (Xenopus laevis (African clawed frog)).